Here is an 814-residue protein sequence, read N- to C-terminus: Plakophilin-2 (814 aa).

Positions 1–329 (MAIPGSLGEC…MTLERAVNML (329 aa)) are required for binding to single-stranded DNA. Serine 44 bears the Phosphoserine mark. Arginine 46 bears the Omega-N-methylarginine mark. Phosphoserine is present on residues serine 82 and serine 130. ARM repeat units follow at residues 200–240 (TCQH…SIKG), 309–352 (CDCL…ESFQ), 354–393 (SEAR…NLVF), 503–549 (PDGR…NLSY), 604–644 (PRGI…NLTA), 652–691 (SVAR…NLSR), 696–737 (QNEI…NLMQ), and 740–782 (YQNA…SLWA).

This sequence belongs to the beta-catenin family. In terms of assembly, interacts with DSC2. Interacts with JUP. Interacts with KRT5/CK5, KRT8/CK8, KRT14/CK14, KRT18/CK18 and VIM. Interacts (via N-terminus) with MARK3/C-TAK1. Interacts with DSP. Interacts with DSG1, DSG2 and DSG3. Interacts (via N-terminus) with CTNNB1. Interacts with CDH1. Interacts with the RNA polymerase III (Pol III) complex proteins POLR3A/RPC155, POLR3F/RPC39 and POLR3C/RPC82. Interacts with CTNNA3. Interacts (via N-terminus) with SCN5A/Nav1.5. Interacts with ANK3/ANKG and GJA1/CX43. Expressed in the heart (at protein level).

Its subcellular location is the nucleus. It is found in the cell junction. The protein resides in the desmosome. It localises to the cytoplasm. Its function is as follows. A component of desmosome cell-cell junctions which are required for positive regulation of cellular adhesion. Regulates focal adhesion turnover resulting in changes in focal adhesion size, cell adhesion and cell spreading, potentially via transcriptional modulation of beta-integrins. Required to maintain gingival epithelial barrier function. Important component of the desmosome that is also required for localization of desmosome component proteins such as DSC2, DSG2 and JUP to the desmosome cell-cell junction. Required for the formation of desmosome cell junctions in cardiomyocytes, thereby required for the correct formation of the heart, specifically trabeculation and formation of the atria walls. Loss of desmosome cell junctions leads to mis-localization of DSP and DSG2 resulting in disruption of cell-cell adhesion and disordered intermediate filaments. Modulates profibrotic gene expression in cardiomyocytes via regulation of DSP expression and subsequent activation of downstream TGFB1 and MAPK14/p38 MAPK signaling. Required for cardiac sodium current propagation and electrical synchrony in cardiac myocytes, via ANK3 stabilization and modulation of SCN5A/Nav1.5 localization to cell-cell junctions. Required for mitochondrial function, nuclear envelope integrity and positive regulation of SIRT3 transcription via maintaining DES localization at its nuclear envelope and cell tip anchoring points, and thereby preserving regulation of the transcriptional program. Maintenance of nuclear envelope integrity protects against DNA damage and transcriptional dysregulation of genes, especially those involved in the electron transport chain, thereby preserving mitochondrial function and protecting against superoxide radical anion generation. Binds single-stranded DNA (ssDNA). May regulate the localization of GJA1 to gap junctions in intercalated disks of the heart. This Rattus norvegicus (Rat) protein is Plakophilin-2.